The sequence spans 824 residues: Sphingomyelin phosphodiesterase 4 (824 aa).

Residues 777-797 (LAFLFIFYILGSLLSLGPLIC) traverse the membrane as a helical segment.

Mg(2+) is required as a cofactor.

The protein resides in the endoplasmic reticulum membrane. Its subcellular location is the golgi apparatus membrane. It is found in the nucleus envelope. It localises to the cell membrane. The protein localises to the sarcolemma. The enzyme catalyses a sphingomyelin + H2O = phosphocholine + an N-acylsphing-4-enine + H(+). Functionally, catalyzes the hydrolysis of membrane sphingomyelin to form phosphorylcholine and ceramide. It has a relevant role in the homeostasis of membrane sphingolipids, thereby influencing membrane integrity, and endoplasmic reticulum organization and function. May sensitize cells to DNA damage-induced apoptosis. This chain is Sphingomyelin phosphodiesterase 4 (smpd4), found in Xenopus laevis (African clawed frog).